The chain runs to 272 residues: Acyl-[acyl-carrier-protein]--UDP-N-acetylglucosamine O-acyltransferase (272 aa).

This sequence belongs to the transferase hexapeptide repeat family. LpxA subfamily. In terms of assembly, homotrimer.

The protein resides in the cytoplasm. It catalyses the reaction a (3R)-hydroxyacyl-[ACP] + UDP-N-acetyl-alpha-D-glucosamine = a UDP-3-O-[(3R)-3-hydroxyacyl]-N-acetyl-alpha-D-glucosamine + holo-[ACP]. It functions in the pathway glycolipid biosynthesis; lipid IV(A) biosynthesis; lipid IV(A) from (3R)-3-hydroxytetradecanoyl-[acyl-carrier-protein] and UDP-N-acetyl-alpha-D-glucosamine: step 1/6. Functionally, involved in the biosynthesis of lipid A, a phosphorylated glycolipid that anchors the lipopolysaccharide to the outer membrane of the cell. This chain is Acyl-[acyl-carrier-protein]--UDP-N-acetylglucosamine O-acyltransferase, found in Methylobacterium radiotolerans (strain ATCC 27329 / DSM 1819 / JCM 2831 / NBRC 15690 / NCIMB 10815 / 0-1).